The sequence spans 997 residues: Protein HIR2 (997 aa).

WD repeat units follow at residues 10–48, 117–152, 153–194, 274–319, and 323–362; these read GISGNVTSLVTIDAEYVVVCGSRGDIQVWHQQQLLDTAF, VSQSIITDVKWDSLLDILFVLTDRPCKIHLFDTRSA, NKKE…VVYH, VHSP…PLFA, and ISDSAINDMIWSSNGLTLFAVSNDNVLYTFAFLQDDLGKT. Residues 408-584 are disordered; the sequence is ADNSSNILST…RKPKEDALGN (177 aa). Over residues 409 to 446 the composition is skewed to polar residues; sequence DNSSNILSTDTNTNEKNLSTVNTTEPQTNSQSSSYNNK. The segment covering 464–480 has biased composition (basic and acidic residues); sequence SDEKAKNLEARPIEAKS. The segment covering 491–501 has biased composition (polar residues); that stretch reads SKSSSVTTSDN. The span at 518 to 538 shows a compositional bias: basic and acidic residues; the sequence is TEKKTKPDKKSIKSENGESKV. Over residues 539–567 the composition is skewed to polar residues; sequence NKAQNTISPKESNTTDNKSTTPDFKNPSY. 2 WD repeats span residues 665–706 and 708–745; these read LFQD…IIPP and TIGVPISFLEACGKYLLCVSSIGELYCWNIASSKLEFP.

This sequence belongs to the WD repeat HIR1 family.

It localises to the nucleus. In terms of biological role, required for replication-independent chromatin assembly and for the periodic repression of histone gene transcription during the cell cycle. The polypeptide is Protein HIR2 (HIR2) (Candida glabrata (strain ATCC 2001 / BCRC 20586 / JCM 3761 / NBRC 0622 / NRRL Y-65 / CBS 138) (Yeast)).